The following is a 478-amino-acid chain: MLYEKFEYNINNLIGNFGLSKISIAVSGGSDSVALLYLANIWAEKNNIELFVISVDHNLREQSKQETHYIQNISNSLNRKHYSLSFYHQNNFSNLQERAREGRYDLMTNLCLELDILVLLTAHHEDDYVENFCLRLERNSGIFGLSSSNINWYNNIQIIRPLYNIPKSKLVEYLVRHNIKWFEDESNSSDKYRRNVIRQKLAKGADYIRHFSKPVYREEFKGDTERSTAAYTLVREDASTGTASKLSLEAKCGKMSKAAIISQQLKTNKLIENEFKPELISAIAEAVKIFEYGFAFLDLVKFDKFSNEVKVQIINFLLIIISGQSRVARFYSVEPILKLITQDVNFKNTLHGCIIKRIQNELLIYREFGKKLPESKILLDKSVIWDNRFCITKNQETPNCFVTHLSLKDYKIIKKQLDLEPLKNLSCKNHNAVLLTLPIIKILEKVIAIPHISYYDNDMWNFEVSFSPNFVSRFTHFC.

27–32 (SGGSDS) is a binding site for ATP.

This sequence belongs to the tRNA(Ile)-lysidine synthase family.

Its subcellular location is the cytoplasm. The enzyme catalyses cytidine(34) in tRNA(Ile2) + L-lysine + ATP = lysidine(34) in tRNA(Ile2) + AMP + diphosphate + H(+). Its function is as follows. Ligates lysine onto the cytidine present at position 34 of the AUA codon-specific tRNA(Ile) that contains the anticodon CAU, in an ATP-dependent manner. Cytidine is converted to lysidine, thus changing the amino acid specificity of the tRNA from methionine to isoleucine. In Rickettsia africae (strain ESF-5), this protein is tRNA(Ile)-lysidine synthase.